The chain runs to 140 residues: Cysteine protease inhibitor 6 (140 aa).

An intrachain disulfide couples Cys103 to Cys109.

The protein belongs to the protease inhibitor I3 (leguminous Kunitz-type inhibitor) family.

The protein resides in the vacuole. Functionally, inhibitor of cysteine proteases. May protect the plant by inhibiting proteases of invading organisms. The chain is Cysteine protease inhibitor 6 from Solanum tuberosum (Potato).